Consider the following 204-residue polypeptide: Protein DESIGUAL 4 (204 aa).

The next 4 helical transmembrane spans lie at 13–33 (IITV…VAGF), 60–80 (FVLG…ANVI), 107–127 (CLFL…NGIW), and 143–163 (VFSI…IYYI). The disordered stretch occupies residues 177–204 (KPNKTKPSELKPIPTEPNEAEPNSTPNP). Residue asparagine 179 is glycosylated (N-linked (GlcNAc...) asparagine).

It belongs to the DESIGUAL family. Only expressed in inflorescences.

The protein localises to the endoplasmic reticulum membrane. This Arabidopsis thaliana (Mouse-ear cress) protein is Protein DESIGUAL 4.